A 687-amino-acid chain; its full sequence is Glycine--tRNA ligase beta subunit (687 aa).

The protein belongs to the class-II aminoacyl-tRNA synthetase family. Tetramer of two alpha and two beta subunits.

Its subcellular location is the cytoplasm. The catalysed reaction is tRNA(Gly) + glycine + ATP = glycyl-tRNA(Gly) + AMP + diphosphate. The chain is Glycine--tRNA ligase beta subunit from Neisseria gonorrhoeae (strain ATCC 700825 / FA 1090).